The primary structure comprises 406 residues: Membrane protein UL43 homolog (406 aa).

10 consecutive transmembrane segments (helical) span residues 48 to 68 (LFLV…QYHV), 71 to 91 (AAVN…PTSV), 103 to 123 (CLQT…CPIS), 126 to 146 (LPFV…VAAV), 162 to 182 (IYFY…VILY), 188 to 208 (YEVL…VDAA), 266 to 286 (SVIP…SHII), 299 to 319 (LAVS…AVLY), 339 to 359 (IAVT…STVA), and 386 to 406 (VYHV…TYVS).

It belongs to the alphaherpesvirinae HHV-1 UL43 family.

The protein localises to the membrane. The sequence is that of Membrane protein UL43 homolog from Varicella-zoster virus (strain Dumas) (HHV-3).